The following is a 387-amino-acid chain: Acetylornithine deacetylase (387 aa).

Residue H80 participates in Zn(2+) binding. D82 is a catalytic residue. Residue D112 coordinates Zn(2+). Residue E144 is part of the active site. E145, E169, and H355 together coordinate Zn(2+).

It belongs to the peptidase M20A family. ArgE subfamily. As to quaternary structure, homodimer. It depends on Zn(2+) as a cofactor. Requires Co(2+) as cofactor. The cofactor is glutathione.

Its subcellular location is the cytoplasm. It catalyses the reaction N(2)-acetyl-L-ornithine + H2O = L-ornithine + acetate. Its pathway is amino-acid biosynthesis; L-arginine biosynthesis; L-ornithine from N(2)-acetyl-L-ornithine (linear): step 1/1. In terms of biological role, catalyzes the hydrolysis of the amide bond of N(2)-acetylated L-amino acids. Cleaves the acetyl group from N-acetyl-L-ornithine to form L-ornithine, an intermediate in L-arginine biosynthesis pathway, and a branchpoint in the synthesis of polyamines. The polypeptide is Acetylornithine deacetylase (Proteus mirabilis (strain HI4320)).